A 459-amino-acid chain; its full sequence is Sensor histidine kinase SpaK (459 aa).

At 1–18 the chain is on the cytoplasmic side; sequence MGIGFKGRKTLLRELVKY. The helical transmembrane segment at 19 to 39 threads the bilayer; the sequence is MVTLCISLVVLALLYIFINTI. Residues 40-155 are Extracellular-facing; sequence AMNTGFSHPA…RKYLPNYELT (116 aa). A helical membrane pass occupies residues 156–176; it reads SICILIILLIIVISIITTYFA. At 177 to 459 the chain is on the cytoplasmic side; that stretch reads NRLRKHFETL…VRVKIPLRNE (283 aa). Positions 244–458 constitute a Histidine kinase domain; that stretch reads ALAHEIKIPI…EVRVKIPLRN (215 aa). His-247 is subject to Phosphohistidine; by autocatalysis.

It is found in the cell membrane. It catalyses the reaction ATP + protein L-histidine = ADP + protein N-phospho-L-histidine.. Functionally, member of the two-component regulatory system SpaK/SpaR involved in the regulation of the biosynthesis of lantibiotic subtilin. SpaK may function as a membrane-associated protein kinase that phosphorylates SpaR in response to environmental signals. The sequence is that of Sensor histidine kinase SpaK (spaK) from Bacillus subtilis.